Here is a 1044-residue protein sequence, read N- to C-terminus: Isoleucine--tRNA ligase (1044 aa).

Residues Pro-48–His-58 carry the 'HIGH' region motif. Positions Lys-594 to Ser-598 match the 'KMSKS' region motif. Lys-597 lines the ATP pocket.

It belongs to the class-I aminoacyl-tRNA synthetase family. IleS type 2 subfamily. As to quaternary structure, monomer. It depends on Zn(2+) as a cofactor.

The protein localises to the cytoplasm. It carries out the reaction tRNA(Ile) + L-isoleucine + ATP = L-isoleucyl-tRNA(Ile) + AMP + diphosphate. Catalyzes the attachment of isoleucine to tRNA(Ile). As IleRS can inadvertently accommodate and process structurally similar amino acids such as valine, to avoid such errors it has two additional distinct tRNA(Ile)-dependent editing activities. One activity is designated as 'pretransfer' editing and involves the hydrolysis of activated Val-AMP. The other activity is designated 'posttransfer' editing and involves deacylation of mischarged Val-tRNA(Ile). The polypeptide is Isoleucine--tRNA ligase (Borrelia hermsii (strain HS1 / DAH)).